Here is a 491-residue protein sequence, read N- to C-terminus: Cytochrome P450 2H1 (491 aa).

Cys-436 lines the heme pocket.

Belongs to the cytochrome P450 family. It depends on heme as a cofactor. In terms of tissue distribution, expressed in liver.

Its subcellular location is the endoplasmic reticulum membrane. It localises to the microsome membrane. The catalysed reaction is an organic molecule + reduced [NADPH--hemoprotein reductase] + O2 = an alcohol + oxidized [NADPH--hemoprotein reductase] + H2O + H(+). In terms of biological role, cytochromes P450 are a group of heme-thiolate monooxygenases. In liver microsomes, this enzyme is involved in an NADPH-dependent electron transport pathway. It oxidizes a variety of structurally unrelated compounds, including steroids, fatty acids, and xenobiotics. This Gallus gallus (Chicken) protein is Cytochrome P450 2H1 (CYP2H1).